Reading from the N-terminus, the 134-residue chain is ATP synthase epsilon chain (134 aa).

It belongs to the ATPase epsilon chain family. In terms of assembly, F-type ATPases have 2 components, CF(1) - the catalytic core - and CF(0) - the membrane proton channel. CF(1) has five subunits: alpha(3), beta(3), gamma(1), delta(1), epsilon(1). CF(0) has three main subunits: a, b and c.

It is found in the cell inner membrane. In terms of biological role, produces ATP from ADP in the presence of a proton gradient across the membrane. The chain is ATP synthase epsilon chain from Sinorhizobium fredii (strain NBRC 101917 / NGR234).